The sequence spans 855 residues: Suppressor of tumorigenicity 14 protein homolog (855 aa).

The disordered stretch occupies residues Met-1–Lys-21. The Cytoplasmic portion of the chain corresponds to Met-1 to Trp-55. Phosphoserine is present on Ser-13. A helical; Signal-anchor for type II membrane protein membrane pass occupies residues Val-56 to Ala-76. Over Trp-77 to Val-855 the chain is Extracellular. The SEA domain occupies Val-86–Pro-203. Asn-109 carries N-linked (GlcNAc...) asparagine glycosylation. A disulfide bridge links Cys-214 with Cys-244. CUB domains lie at Cys-214–Leu-334 and Cys-340–Phe-447. Residues Asn-302 and Asn-365 are each glycosylated (N-linked (GlcNAc...) asparagine). Intrachain disulfides connect Cys-340–Cys-366, Cys-397–Cys-410, Cys-453–Cys-464, Cys-459–Cys-477, Cys-471–Cys-486, Cys-488–Cys-501, Cys-496–Cys-514, Cys-508–Cys-523, Cys-525–Cys-537, Cys-532–Cys-550, Cys-544–Cys-559, Cys-567–Cys-579, Cys-574–Cys-593, Cys-587–Cys-602, and Cys-641–Cys-657. LDL-receptor class A domains follow at residues Pro-452–Lys-487, Lys-487–Ser-524, Ser-524–Gln-560, and Pro-566–Asp-603. Asn-489 carries N-linked (GlcNAc...) asparagine glycosylation. The Peptidase S1 domain maps to Val-615–Gly-854. Active-site charge relay system residues include His-656 and Asp-711. Asn-772 carries an N-linked (GlcNAc...) asparagine glycan. Intrachain disulfides connect Cys-776–Cys-790 and Cys-801–Cys-830. Residue Ser-805 is the Charge relay system of the active site.

This sequence belongs to the peptidase S1 family. Interacts with CDCP1. May interact with TMEFF1.

The protein localises to the membrane. The catalysed reaction is Cleaves various synthetic substrates with Arg or Lys at the P1 position and prefers small side-chain amino acids, such as Ala and Gly, at the P2 position.. Exhibits trypsin-like activity as defined by cleavage of synthetic substrates with Arg or Lys as the P1 site. Involved in the terminal differentiation of keratinocytes through prostasin (PRSS8) activation and filaggrin (FLG) processing. Proteolytically cleaves and therefore activates TMPRSS13. This Bos taurus (Bovine) protein is Suppressor of tumorigenicity 14 protein homolog (ST14).